A 217-amino-acid chain; its full sequence is MNGELVLRLDGARPLSPASVEELSALCDRAEDDREAGPVTVHVTGVPSAGWTAGLTVGLVSKWERVVRRFERLGRLTIAVASGECAGTALDLLLAADLRIVTPGTRLRLAPVGGSTWPGMSVYRLTQQAGAAGIRRAVLLGTPIEVDRALALNLVDEVSDDPAKTLAGLAEAAAALDGAETAIRRQLIFEDGSTTFEDALGAHLAAADRALRREATS.

Belongs to the enoyl-CoA hydratase/isomerase family.

It catalyses the reaction a (3S)-3-hydroxyacyl-CoA = a (2E)-enoyl-CoA + H2O. The enzyme catalyses a 4-saturated-(3S)-3-hydroxyacyl-CoA = a (3E)-enoyl-CoA + H2O. The protein operates within antibiotic biosynthesis; vancomycin biosynthesis. Functionally, involved in the biosynthesis of the nonproteinogenic amino acid monomer (S)-3,5-dihydroxyphenylglycine (Dpg) responsible of the production of vancomycin and teicoplanin antibiotics. Catalyzes the syn-addition of a water molecule across the double bond of a trans-2-enoyl-CoA thioester, resulting in the formation of a beta-hydroxyacyl-CoA thioester. Physiologically, DpgB could act as a dehydratase, facilitating the aromatization of the DPA-S-DgpA or DPA-S-CoA intermediate. The sequence is that of Enoyl-CoA-hydratase (dpgB) from Amycolatopsis orientalis (Nocardia orientalis).